The chain runs to 329 residues: Prostaglandin reductase 1 (329 aa).

Phosphothreonine is present on Thr-18. Ser-20 bears the Phosphoserine mark. NADP(+) contacts are provided by residues 152–155 (GAVG), Lys-178, Tyr-193, Asn-217, 239–245 (CGAISVY), 270–272 (FVV), and Asn-321. Lys-178 carries the N6-(2-hydroxyisobutyryl)lysine; alternate modification. Position 178 is an N6-acetyllysine; alternate (Lys-178).

The protein belongs to the NADP-dependent oxidoreductase L4BD family. As to quaternary structure, monomer or homodimer.

The protein resides in the cytoplasm. The catalysed reaction is 13,14-dihydro-15-oxo-prostaglandin E1 + NADP(+) = 15-oxoprostaglandin E1 + NADPH + H(+). It carries out the reaction 13,14-dihydro-15-oxo-prostaglandin E2 + NADP(+) = 15-oxoprostaglandin E2 + NADPH + H(+). It catalyses the reaction 13,14-dihydro-15-oxo-prostaglandin F1alpha + NADP(+) = 15-oxoprostaglandin F1alpha + NADPH + H(+). The enzyme catalyses 13,14-dihydro-15-oxo-PGF2alpha + NADP(+) = 15-oxoprostaglandin F2alpha + NADPH + H(+). The catalysed reaction is leukotriene B4 + NADP(+) = 12-oxo-leukotriene B4 + NADPH + H(+). It carries out the reaction 20-hydroxy-leukotriene B4 + NADP(+) = 12-oxo-20-hydroxy-leukotriene B4 + NADPH + H(+). It catalyses the reaction 6-trans-leukotriene B4 + NADP(+) = 12-oxo-(5S)-hydroxy-(6E,8E,10E,14Z)-eicosatetraenoate + NADPH + H(+). The enzyme catalyses (5S,12S)-dihydroxy-(6E,10E,12E,14Z)-eicosatetraenoate + NADP(+) = 12-oxo-(5S)-hydroxy-(6E,8E,10E,14Z)-eicosatetraenoate + NADPH + H(+). The catalysed reaction is an n-alkanal + NADP(+) = an alk-2-enal + NADPH + H(+). It carries out the reaction hexanal + NADP(+) = (E)-hex-2-enal + NADPH + H(+). It catalyses the reaction octanal + NADP(+) = (2E)-octenal + NADPH + H(+). The enzyme catalyses decanal + NADP(+) = (2E)-decenal + NADPH + H(+). The catalysed reaction is dodecanal + NADP(+) = (2E)-dodecenal + NADPH + H(+). It carries out the reaction 4-hydroxynonanal + NADP(+) = (E)-4-hydroxynon-2-enal + NADPH + H(+). It catalyses the reaction pentan-2-one + NADP(+) = (E)-pent-3-en-2-one + NADPH + H(+). The enzyme catalyses nonan-2-one + NADP(+) = (3E)-nonen-2-one + NADPH + H(+). In terms of biological role, NAD(P)H-dependent oxidoreductase involved in metabolic inactivation of pro- and anti-inflammatory eicosanoids: prostaglandins (PG), leukotrienes (LT) and lipoxins (LX). Catalyzes with high efficiency the reduction of the 13,14 double bond of 15-oxoPGs, including 15-oxo-PGE1, 15-oxo-PGE2, 15-oxo-PGF1-alpha and 15-oxo-PGF2-alpha. Catalyzes with lower efficiency the oxidation of the hydroxyl group at C12 of LTB4 and its derivatives, converting them into biologically less active 12-oxo-LTB4 metabolites. Reduces 15-oxo-LXA4 to 13,14 dihydro-15-oxo-LXA4, enhancing neutrophil recruitment at the inflammatory site. Plays a role in metabolic detoxification of alkenals and ketones. Reduces alpha,beta-unsaturated alkenals and ketones, particularly those with medium-chain length, showing highest affinity toward (2E)-decenal and (3E)-3-nonen-2-one. May inactivate 4-hydroxy-2-nonenal, a cytotoxic lipid constituent of oxidized low-density lipoprotein particles. This Bos taurus (Bovine) protein is Prostaglandin reductase 1 (PTGR1).